A 1220-amino-acid polypeptide reads, in one-letter code: Plasma membrane calcium-transporting ATPase 1 (1220 aa).

Gly-2 carries the post-translational modification N-acetylglycine. Residues Gly-2–Ala-105 are Cytoplasmic-facing. Phosphoserine occurs at positions 8 and 17. A helical membrane pass occupies residues Leu-106–Phe-126. Topologically, residues Tyr-127–Ile-154 are extracellular. A helical membrane pass occupies residues Glu-155 to Trp-175. At Ser-176–Leu-366 the chain is on the cytoplasmic side. The tract at residues Glu-297–Lys-356 is disordered. Composition is skewed to basic and acidic residues over residues Lys-312–Ala-325 and Lys-337–Lys-356. Phosphoserine is present on Ser-338. A helical membrane pass occupies residues Thr-367 to Ile-386. Residues Ile-387–Lys-418 are Extracellular-facing. The chain crosses the membrane as a helical span at residues Phe-419 to Val-439. Residues Thr-440–Phe-855 are Cytoplasmic-facing. Asp-475 acts as the 4-aspartylphosphate intermediate in catalysis. Asp-475, Thr-477, and Asp-797 together coordinate Mg(2+). A helical membrane pass occupies residues Leu-856 to Ile-876. At Thr-877 to Leu-882 the chain is on the extracellular side. The helical transmembrane segment at Lys-883–Ala-903 threads the bilayer. The Cytoplasmic segment spans residues Thr-904–Thr-927. The helical transmembrane segment at Met-928–Phe-948 threads the bilayer. Topologically, residues Ala-949 to His-971 are extracellular. A helical membrane pass occupies residues Tyr-972–Arg-991. The Cytoplasmic portion of the chain corresponds to Lys-992–Asn-1005. Residues Asn-1006–Gly-1027 traverse the membrane as a helical segment. The Extracellular segment spans residues Gly-1028–Glu-1039. Residues Gln-1040–Thr-1060 form a helical membrane-spanning segment. The Cytoplasmic segment spans residues Ile-1061–Leu-1220. The interval Leu-1100–Gln-1117 is calmodulin-binding subdomain A. Thr-1116 bears the Phosphothreonine; by PKC mark. Residues Ile-1118 to Leu-1220 form a required for basolateral membrane targeting region. Phosphoserine is present on residues Ser-1140 and Ser-1155. A disordered region spans residues Pro-1160–Leu-1220. At Thr-1165 the chain carries Phosphothreonine. Ser-1178 and Ser-1182 each carry phosphoserine. A compositionally biased stretch (polar residues) spans Met-1200–Leu-1220.

It belongs to the cation transport ATPase (P-type) (TC 3.A.3) family. Type IIB subfamily. As to quaternary structure, monomer. Dimer. Oligomer. Calmodulin binding. Interacts with PDZD11. Interacts with SLC35G1 and STIM1. Interacts with YWHAE; interacts with the monomeric and dimeric forms of the YWHAE but prefer the monomer form; this interaction inhibits calcium-transporting ATPase activity. Interacts with NPTN; this interaction stabilizes ATP2B1 and increases ATPase activity; this interaction controls T cell calcium homeostasis following T cell activation. Interacts with EPB41; regulates small intestinal calcium absorption through regulation of membrane expression of ATP2B1. In terms of tissue distribution, expressed in the retina, with strongest expression in the outer plexiform layer and lower expression levels in the inner nuclear layer and the inner plexiform layer. Specifically expressed in the following retinal cell types: photoreceptor cells, cone bipolar cells and horizontal cells. Expressed in osteoclasts (at protein level). Expressed at highest levels in brain, intestine, kidney, and stomach, and at lower levels in liver, lung, aorta, portal vein, urinary bladder, diaphragm, seminal vesicles and testes. Expressed in small intestinal epithelium.

It localises to the cell membrane. The protein localises to the basolateral cell membrane. The protein resides in the synapse. It is found in the presynaptic cell membrane. Its subcellular location is the cytoplasmic vesicle. It localises to the secretory vesicle. The protein localises to the synaptic vesicle membrane. The catalysed reaction is Ca(2+)(in) + ATP + H2O = Ca(2+)(out) + ADP + phosphate + H(+). Catalyzes the hydrolysis of ATP coupled with the transport of calcium from the cytoplasm to the extracellular space thereby maintaining intracellular calcium homeostasis. Plays a role in blood pressure regulation through regulation of intracellular calcium concentration and nitric oxide production leading to regulation of vascular smooth muscle cells vasoconstriction. Positively regulates bone mineralization through absorption of calcium from the intestine. Plays dual roles in osteoclast differentiation and survival by regulating RANKL-induced calcium oscillations in preosteoclasts and mediating calcium extrusion in mature osteoclasts. Regulates insulin sensitivity through calcium/calmodulin signaling pathway by regulating AKT1 activation and NOS3 activation in endothelial cells. May play a role in synaptic transmission by modulating calcium and proton dynamics at the synaptic vesicles. The protein is Plasma membrane calcium-transporting ATPase 1 of Mus musculus (Mouse).